Reading from the N-terminus, the 162-residue chain is Probable chemoreceptor glutamine deamidase CheD (162 aa).

The protein belongs to the CheD family.

It catalyses the reaction L-glutaminyl-[protein] + H2O = L-glutamyl-[protein] + NH4(+). Its function is as follows. Probably deamidates glutamine residues to glutamate on methyl-accepting chemotaxis receptors (MCPs), playing an important role in chemotaxis. This is Probable chemoreceptor glutamine deamidase CheD from Clostridium kluyveri (strain ATCC 8527 / DSM 555 / NBRC 12016 / NCIMB 10680 / K1).